A 393-amino-acid polypeptide reads, in one-letter code: N-lysine methyltransferase KMT5A (393 aa).

The segment at 68–88 (PGPEMVERRGPGRPRTDGENV) is disordered. Residues 72 to 85 (MVERRGPGRPRTDG) show a composition bias toward basic and acidic residues. At S100 the chain carries Phosphoserine. Residues 134 to 163 (RKREEKRNAGNAVRSAMKSEEQKIKDARKG) adopt a coiled-coil conformation. Residues 135 to 241 (KREEKRNAGN…SRKSKAELQS (107 aa)) are disordered. Residues 150 to 162 (MKSEEQKIKDARK) are compositionally biased toward basic and acidic residues. K162 is subject to N6-acetyllysine. T181 carries the phosphothreonine modification. Positions 197–213 (ALKKPIKGKQAPRKKAQ) are enriched in basic residues. In terms of domain architecture, SET spans 257-378 (EGMKIDLIDG…AGEELLYDYG (122 aa)). Residues 267–269 (KGR), Y312, and 339–340 (NH) contribute to the S-adenosyl-L-methionine site.

Belongs to the class V-like SAM-binding methyltransferase superfamily. Histone-lysine methyltransferase family. PR/SET subfamily. As to quaternary structure, interacts with L3MBTL1. In terms of assembly, interacts with SIRT2 (phosphorylated form); the interaction is direct, stimulates KMT5A-mediated methyltransferase activity at histone H4 'Lys-20' (H4K20me1) and is increased in a H(2)O(2)-induced oxidative stress-dependent manner. Acetylated at Lys-162; does not affect methyltransferase activity. Deacetylated at Lys-162 possibly by SIRT2; does not change methyltransferase activity. Post-translationally, ubiquitinated and degraded by the DCX(DTL) complex.

It is found in the nucleus. It localises to the chromosome. It catalyses the reaction L-lysyl(20)-[histone H4] + S-adenosyl-L-methionine = N(6)-methyl-L-lysyl(20)-[histone H4] + S-adenosyl-L-homocysteine + H(+). The enzyme catalyses L-lysyl-[protein] + S-adenosyl-L-methionine = N(6)-methyl-L-lysyl-[protein] + S-adenosyl-L-homocysteine + H(+). Protein-lysine N-methyltransferase that monomethylates both histones and non-histone proteins. Specifically monomethylates 'Lys-20' of histone H4 (H4K20me1). H4K20me1 is enriched during mitosis and represents a specific tag for epigenetic transcriptional repression. Mainly functions in euchromatin regions, thereby playing a central role in the silencing of euchromatic genes. Required for cell proliferation, probably by contributing to the maintenance of proper higher-order structure of DNA during mitosis. Involved in chromosome condensation and proper cytokinesis. Nucleosomes are preferred as substrate compared to free histones. Mediates monomethylation of p53/TP53 at 'Lys-382', leading to repress p53/TP53-target genes. Plays a negative role in TGF-beta response regulation and a positive role in cell migration. This is N-lysine methyltransferase KMT5A from Homo sapiens (Human).